The following is a 619-amino-acid chain: UvrABC system protein C (619 aa).

The region spanning 20-98 is the GIY-YIG domain; that stretch reads TAPGVYRMYA…IKSLSPRYNV (79 aa). The region spanning 207–242 is the UVR domain; it reads DQLGEEIMHSMQQASEALEFERAARLRDLLSSLRSM.

The protein belongs to the UvrC family. In terms of assembly, interacts with UvrB in an incision complex.

The protein resides in the cytoplasm. Its function is as follows. The UvrABC repair system catalyzes the recognition and processing of DNA lesions. UvrC both incises the 5' and 3' sides of the lesion. The N-terminal half is responsible for the 3' incision and the C-terminal half is responsible for the 5' incision. The sequence is that of UvrABC system protein C from Xanthomonas axonopodis pv. citri (strain 306).